Here is a 299-residue protein sequence, read N- to C-terminus: DNA-binding transcriptional activator HetR (299 aa).

S152 is an active-site residue.

This sequence belongs to the peptidase S48 family. Homodimer; disulfide-linked.

Functionally, controls heterocyst differentiation. Dimerization is required for DNA-binding. Has both a protease and a DNA-binding activity. Increased expression leads to more heterocysts than usual. This is DNA-binding transcriptional activator HetR from Nostoc punctiforme (strain ATCC 29133 / PCC 73102).